The following is a 256-amino-acid chain: 3-isopropylmalate dehydratase small subunit 2 (256 aa).

A chloroplast-targeting transit peptide spans 1 to 59; the sequence is MAYSLPTFPQALPCSSTKTSSSLATFRSPFLRFNGSTSLIPSSISITSRGTSSPTIIPR.

It belongs to the LeuD family. As to quaternary structure, heterodimer of the large LEUC/IIL1 subunit and the small LEUD (SSU1, SSU2 or SSU3) subunits. In terms of tissue distribution, expressed in vascular bundles of roots, cotyledons and rosette leaves. Expressed in stem vascular bundles which branche off into lateral inflorescences. Expressed in connective tissues in anthers. In young seedlings, expressed in cotyledon epidermal cells and vasculare bundles. In hypocotyls, expressed in parenchyma cells surrounding the vasculature and further peripheral cells. In seedling roots, expressed in cells along the vasculature. In roots of adult plants, expressed in cells closely associated with the stele. In flowering stalks, expressed in parenchyma cells associated with the phloem or the xylem. Expressed in the vasculature of sepals and petals.

The protein resides in the plastid. It is found in the chloroplast stroma. It carries out the reaction (2R,3S)-3-isopropylmalate = (2S)-2-isopropylmalate. The catalysed reaction is a 2-(omega-methylsulfanyl)alkylmalate = a 2-(omega-methylsulfanyl)alkylmaleate + H2O. It catalyses the reaction 2-(3-methylsulfanyl)propylmalate = 2-(2-methylsulfanyl)propylmaleate + H2O. The enzyme catalyses a 3-(omega-methylsulfanyl)alkylmalate = a 2-(omega-methylsulfanyl)alkylmaleate + H2O. It carries out the reaction 2-(2-methylsulfanyl)ethylmalate = 2-(2-methylsulfanyl)ethylmaleate + H2O. The catalysed reaction is 3-(2-methylsulfanyl)ethylmalate = 2-(2-methylsulfanyl)ethylmaleate + H2O. It catalyses the reaction 3-(3-methylsulfanyl)propylmalate = 2-(2-methylsulfanyl)propylmaleate + H2O. It functions in the pathway amino-acid biosynthesis; L-leucine biosynthesis; L-leucine from 3-methyl-2-oxobutanoate: step 2/4. Catalyzes the isomerization between 2-isopropylmalate and 3-isopropylmalate, via the formation of 2-isopropylmaleate. Functions redundantly with LEUD2 in the methionine chain elongation pathway of aliphatic glucosinolate formation. The chain is 3-isopropylmalate dehydratase small subunit 2 from Arabidopsis thaliana (Mouse-ear cress).